The primary structure comprises 277 residues: Shikimate dehydrogenase (NADP(+)) (277 aa).

Residues S17–S19 and T64 contribute to the shikimate site. Residue K68 is the Proton acceptor of the active site. Residues N88 and D103 each coordinate shikimate. Residues G128 to S132, N152 to R157, and L217 each bind NADP(+). A shikimate-binding site is contributed by Y219. Position 240 (G240) interacts with NADP(+).

This sequence belongs to the shikimate dehydrogenase family. Homodimer.

It catalyses the reaction shikimate + NADP(+) = 3-dehydroshikimate + NADPH + H(+). The protein operates within metabolic intermediate biosynthesis; chorismate biosynthesis; chorismate from D-erythrose 4-phosphate and phosphoenolpyruvate: step 4/7. In terms of biological role, involved in the biosynthesis of the chorismate, which leads to the biosynthesis of aromatic amino acids. Catalyzes the reversible NADPH linked reduction of 3-dehydroshikimate (DHSA) to yield shikimate (SA). The chain is Shikimate dehydrogenase (NADP(+)) from Rhodopseudomonas palustris (strain BisB18).